The following is a 438-amino-acid chain: Putative F-box/FBD/LRR-repeat protein At2g05300 (438 aa).

Residues 13–59 (EDRISQLPDPLLTQILNLLPTEEAVKTSVLSTRWRTLWLWVPNLELS) form the F-box domain. 4 LRR repeats span residues 135–166 (CDSL…RLKD), 167–192 (IVFH…KIDV), 235–261 (CLII…DISL), and 318–346 (YVTL…ILER). The FBD domain maps to 362–409 (SMSSVPECLLTSLEFVEFKAPICGLGPEMMLVWYFLKNSPTLKKLTLP).

This is Putative F-box/FBD/LRR-repeat protein At2g05300 from Arabidopsis thaliana (Mouse-ear cress).